A 357-amino-acid polypeptide reads, in one-letter code: Peptide chain release factor 1 (357 aa).

Gln234 is modified (N5-methylglutamine). Over residues 284-307 the composition is skewed to basic and acidic residues; sequence KKQEQRSNDRKQQVGSGDRSERIR. The disordered stretch occupies residues 284-313; that stretch reads KKQEQRSNDRKQQVGSGDRSERIRTYNFPQ.

This sequence belongs to the prokaryotic/mitochondrial release factor family. In terms of processing, methylated by PrmC. Methylation increases the termination efficiency of RF1.

Its subcellular location is the cytoplasm. Functionally, peptide chain release factor 1 directs the termination of translation in response to the peptide chain termination codons UAG and UAA. This is Peptide chain release factor 1 from Borrelia turicatae (strain 91E135).